The sequence spans 382 residues: Protein RecA (382 aa).

The disordered stretch occupies residues 1 to 20 (MPADVKAAQSSAGDSRPGER). 79 to 86 (GPESSGKT) contacts ATP. Over residues 360–369 (SAAAKPSAKT) the composition is skewed to low complexity. The tract at residues 360–382 (SAAAKPSAKTADTDKKLVADGAA) is disordered. Basic and acidic residues predominate over residues 370 to 382 (ADTDKKLVADGAA).

Belongs to the RecA family.

It is found in the cytoplasm. In terms of biological role, can catalyze the hydrolysis of ATP in the presence of single-stranded DNA, the ATP-dependent uptake of single-stranded DNA by duplex DNA, and the ATP-dependent hybridization of homologous single-stranded DNAs. It interacts with LexA causing its activation and leading to its autocatalytic cleavage. In Synechococcus sp. (strain CC9311), this protein is Protein RecA.